The following is a 164-amino-acid chain: FMN reductase (NADH) RutF (164 aa).

It belongs to the non-flavoprotein flavin reductase family. RutF subfamily.

The catalysed reaction is FMNH2 + NAD(+) = FMN + NADH + 2 H(+). Functionally, catalyzes the reduction of FMN to FMNH2 which is used to reduce pyrimidine by RutA via the Rut pathway. The sequence is that of FMN reductase (NADH) RutF from Klebsiella pneumoniae subsp. pneumoniae (strain ATCC 700721 / MGH 78578).